Reading from the N-terminus, the 366-residue chain is Peptide chain release factor 2 (366 aa).

The residue at position 246 (glutamine 246) is an N5-methylglutamine.

This sequence belongs to the prokaryotic/mitochondrial release factor family. In terms of processing, methylated by PrmC. Methylation increases the termination efficiency of RF2.

It localises to the cytoplasm. Peptide chain release factor 2 directs the termination of translation in response to the peptide chain termination codons UGA and UAA. This Frankia casuarinae (strain DSM 45818 / CECT 9043 / HFP020203 / CcI3) protein is Peptide chain release factor 2.